The primary structure comprises 290 residues: 33 kDa chaperonin (290 aa).

2 disulfides stabilise this stretch: Cys235–Cys237 and Cys268–Cys271.

The protein belongs to the HSP33 family. In terms of processing, under oxidizing conditions two disulfide bonds are formed involving the reactive cysteines. Under reducing conditions zinc is bound to the reactive cysteines and the protein is inactive.

The protein resides in the cytoplasm. In terms of biological role, redox regulated molecular chaperone. Protects both thermally unfolding and oxidatively damaged proteins from irreversible aggregation. Plays an important role in the bacterial defense system toward oxidative stress. This chain is 33 kDa chaperonin, found in Streptococcus uberis (strain ATCC BAA-854 / 0140J).